A 391-amino-acid polypeptide reads, in one-letter code: MKLICRQSDLSSGLSLVSRAVSSRPTHPVLGNVLLEADADKNYLRLTAFDLSLGIQSSFTADVQQSGRITLPAKLLNDIVSRLPDGDITLAIDPDGDAGDSHLTTITSESGRFQIRGLDADDFPALPTVEGVKPLLLPVATLNEGLRGALFAASTDETKQVLTGVHIKGSGDSLEFAATDGHRLAVVEAPTQIENDEGEAVITGSDLADFAVTIPARALRELERMVASQGNSDLVSLVVNDTQVIFELGDQRLTSRKLEGAYPAYDQLIPRQFSRTVTMERKRLITSLERVSVLADQKNNLVTFTLQSPGNQLQLAVEAQDLGHGEESMGAEIIGEGGQIAFNIKYLMDGLKALPSNDIQMQLNEGNQPVIFTPLGGLKMTYLVMPVRLVN.

It belongs to the beta sliding clamp family. As to quaternary structure, forms a ring-shaped head-to-tail homodimer around DNA which binds and tethers DNA polymerases and other proteins to the DNA. The DNA replisome complex has a single clamp-loading complex (3 tau and 1 each of delta, delta', psi and chi subunits) which binds 3 Pol III cores (1 core on the leading strand and 2 on the lagging strand) each with a beta sliding clamp dimer. Additional proteins in the replisome are other copies of gamma, psi and chi, Ssb, DNA helicase and RNA primase.

It is found in the cytoplasm. In terms of biological role, confers DNA tethering and processivity to DNA polymerases and other proteins. Acts as a clamp, forming a ring around DNA (a reaction catalyzed by the clamp-loading complex) which diffuses in an ATP-independent manner freely and bidirectionally along dsDNA. Initially characterized for its ability to contact the catalytic subunit of DNA polymerase III (Pol III), a complex, multichain enzyme responsible for most of the replicative synthesis in bacteria; Pol III exhibits 3'-5' exonuclease proofreading activity. The beta chain is required for initiation of replication as well as for processivity of DNA replication. The protein is Beta sliding clamp (dnaN) of Synechocystis sp. (strain ATCC 27184 / PCC 6803 / Kazusa).